The primary structure comprises 621 residues: 1-deoxy-D-xylulose-5-phosphate synthase (621 aa).

Thiamine diphosphate is bound by residues His-80 and 121 to 123; that span reads GHS. Mg(2+) is bound at residue Asp-152. Residues 153-154, Asn-181, Tyr-288, and Glu-370 each bind thiamine diphosphate; that span reads GA. Asn-181 provides a ligand contact to Mg(2+).

It belongs to the transketolase family. DXPS subfamily. In terms of assembly, homodimer. Mg(2+) serves as cofactor. Thiamine diphosphate is required as a cofactor.

The catalysed reaction is D-glyceraldehyde 3-phosphate + pyruvate + H(+) = 1-deoxy-D-xylulose 5-phosphate + CO2. It participates in metabolic intermediate biosynthesis; 1-deoxy-D-xylulose 5-phosphate biosynthesis; 1-deoxy-D-xylulose 5-phosphate from D-glyceraldehyde 3-phosphate and pyruvate: step 1/1. Catalyzes the acyloin condensation reaction between C atoms 2 and 3 of pyruvate and glyceraldehyde 3-phosphate to yield 1-deoxy-D-xylulose-5-phosphate (DXP). The chain is 1-deoxy-D-xylulose-5-phosphate synthase from Shewanella frigidimarina (strain NCIMB 400).